The primary structure comprises 177 residues: Large ribosomal subunit protein uL6 (177 aa).

At Lys44 the chain carries N6-acetyllysine.

This sequence belongs to the universal ribosomal protein uL6 family. As to quaternary structure, part of the 50S ribosomal subunit.

Its function is as follows. This protein binds to the 23S rRNA, and is important in its secondary structure. It is located near the subunit interface in the base of the L7/L12 stalk, and near the tRNA binding site of the peptidyltransferase center. The protein is Large ribosomal subunit protein uL6 of Shigella sonnei (strain Ss046).